Consider the following 1004-residue polypeptide: 2-oxoglutarate dehydrogenase E1 component (1004 aa).

This sequence belongs to the alpha-ketoglutarate dehydrogenase family. As to quaternary structure, homodimer. Part of the 2-oxoglutarate dehydrogenase (OGDH) complex composed of E1 (2-oxoglutarate dehydrogenase), E2 (dihydrolipoamide succinyltransferase) and E3 (dihydrolipoamide dehydrogenase); the complex contains multiple copies of the three enzymatic components (E1, E2 and E3). Requires thiamine diphosphate as cofactor.

The enzyme catalyses N(6)-[(R)-lipoyl]-L-lysyl-[protein] + 2-oxoglutarate + H(+) = N(6)-[(R)-S(8)-succinyldihydrolipoyl]-L-lysyl-[protein] + CO2. In terms of biological role, E1 component of the 2-oxoglutarate dehydrogenase (OGDH) complex which catalyzes the decarboxylation of 2-oxoglutarate, the first step in the conversion of 2-oxoglutarate to succinyl-CoA and CO(2). The sequence is that of 2-oxoglutarate dehydrogenase E1 component from Brucella canis (strain ATCC 23365 / NCTC 10854 / RM-666).